The chain runs to 141 residues: VLSPADKTNVKSTWDKIGGHAGEYGGEALERTFVSFPTTKTYFPHFDLSHGSAQVKAHGKKVADALTNAVAHMDDLPGALSALSDLHAYKLRVDPVNFKLLSHCLLVTLACHHPAEFTPAVHASLDKFFSAVSTVLTSKYR.

The 141-residue stretch at 1–141 folds into the Globin domain; the sequence is VLSPADKTNV…VSTVLTSKYR (141 aa). Ser-3 carries the post-translational modification Phosphoserine. The residue at position 7 (Lys-7) is an N6-succinyllysine. Phosphothreonine is present on Thr-8. An N6-succinyllysine modification is found at Lys-11. An N6-acetyllysine; alternate modification is found at Lys-16. At Lys-16 the chain carries N6-succinyllysine; alternate. Tyr-24 bears the Phosphotyrosine mark. Ser-35 bears the Phosphoserine mark. Lys-40 bears the N6-succinyllysine mark. Position 49 is a phosphoserine (Ser-49). His-58 provides a ligand contact to O2. Position 87 (His-87) interacts with heme b. The residue at position 102 (Ser-102) is a Phosphoserine. Thr-108 carries the phosphothreonine modification. Residue Ser-124 is modified to Phosphoserine. A phosphothreonine mark is found at Thr-134 and Thr-137. Phosphoserine is present on Ser-138.

Belongs to the globin family. As to quaternary structure, heterotetramer of two alpha chains and two beta chains. In terms of tissue distribution, red blood cells.

Functionally, involved in oxygen transport from the lung to the various peripheral tissues. In terms of biological role, hemopressin acts as an antagonist peptide of the cannabinoid receptor CNR1. Hemopressin-binding efficiently blocks cannabinoid receptor CNR1 and subsequent signaling. In Lutra lutra (European river otter), this protein is Hemoglobin subunit alpha (HBA).